Reading from the N-terminus, the 189-residue chain is GTP cyclohydrolase 1 (189 aa).

The Zn(2+) site is built by cysteine 79, histidine 82, and cysteine 150.

The protein belongs to the GTP cyclohydrolase I family. In terms of assembly, homomer.

It carries out the reaction GTP + H2O = 7,8-dihydroneopterin 3'-triphosphate + formate + H(+). It participates in cofactor biosynthesis; 7,8-dihydroneopterin triphosphate biosynthesis; 7,8-dihydroneopterin triphosphate from GTP: step 1/1. This is GTP cyclohydrolase 1 from Rickettsia africae (strain ESF-5).